The sequence spans 113 residues: Death-associated protein-like 1.L (113 aa).

Residues Met1 to Leu57 are disordered.

It belongs to the DAP-DAPL1 family. Associates with ribosomes; preventing translation. Interacts with eiF5a (eif5a and eif5a2); preventing translation.

Functionally, ribosome-binding protein that promotes ribosome hibernation, a process during which ribosomes are stabilized in an inactive state and preserved from proteasomal degradation. Acts via its association with eiF5a (eif5a and eif5a2) at the polypeptide exit tunnel of the ribosome, preventing mRNA translation. Plays a key role in ribosome hibernation in the mature egg by preventing mRNA translation, leading to ribosome inactivation. Ribosomes, which are produced in large quantities during oogenesis, are stored and translationally repressed in the egg and early embryo. This is Death-associated protein-like 1.L (dapl1.L) from Xenopus laevis (African clawed frog).